Reading from the N-terminus, the 307-residue chain is N-acetylmuramic acid 6-phosphate etherase (307 aa).

The region spanning 59 to 222 (TADRLRQGGR…STGVMVKLGK (164 aa)) is the SIS domain. Catalysis depends on E87, which acts as the Proton donor. Residue E118 is part of the active site.

The protein belongs to the GCKR-like family. MurNAc-6-P etherase subfamily. In terms of assembly, homodimer.

The catalysed reaction is N-acetyl-D-muramate 6-phosphate + H2O = N-acetyl-D-glucosamine 6-phosphate + (R)-lactate. It participates in amino-sugar metabolism; N-acetylmuramate degradation. Its function is as follows. Specifically catalyzes the cleavage of the D-lactyl ether substituent of MurNAc 6-phosphate, producing GlcNAc 6-phosphate and D-lactate. In Nostoc sp. (strain PCC 7120 / SAG 25.82 / UTEX 2576), this protein is N-acetylmuramic acid 6-phosphate etherase.